Reading from the N-terminus, the 89-residue chain is Small ribosomal subunit protein uS14A (89 aa).

Belongs to the universal ribosomal protein uS14 family. In terms of assembly, part of the 30S ribosomal subunit. Contacts proteins S3 and S10.

Its function is as follows. Binds 16S rRNA, required for the assembly of 30S particles and may also be responsible for determining the conformation of the 16S rRNA at the A site. This chain is Small ribosomal subunit protein uS14A, found in Staphylococcus aureus (strain Newman).